The chain runs to 532 residues: Nucleobase-ascorbate transporter 6 (532 aa).

The tract at residues 1–24 is disordered; sequence MAGGGAPAPKADEPQPHPPKDQLP. The span at 10–20 shows a compositional bias: basic and acidic residues; that stretch reads KADEPQPHPPK. 12 consecutive transmembrane segments (helical) span residues 39 to 59, 75 to 95, 97 to 117, 137 to 157, 163 to 185, 192 to 212, 223 to 243, 289 to 309, 361 to 381, 392 to 414, 426 to 446, and 463 to 483; these read AILL…LIPT, VIQT…LFGT, LPAV…IILS, TQGA…SGLW, FLSP…EFGF, IEIG…LPHV, FAVI…TVGG, FAMM…FVAV, VGSR…SILG, APII…LSFL, FILG…NEYT, and DMVN…AFFL.

The protein belongs to the nucleobase:cation symporter-2 (NCS2) (TC 2.A.40) family. As to expression, expressed in the apical region of cotyledons 4 days after imbibition (DAI). Expressed in the whole vasculature at 12 DAI. Expressed in the root central cylinder and lateral root primordia. Expressed in the vasculature of sepals, filaments, carpels and developing siliques.

The protein resides in the membrane. The polypeptide is Nucleobase-ascorbate transporter 6 (NAT6) (Arabidopsis thaliana (Mouse-ear cress)).